A 403-amino-acid polypeptide reads, in one-letter code: Phosphopentomutase (403 aa).

Mn(2+) contacts are provided by D13, D298, H303, D339, H340, and H351.

The protein belongs to the phosphopentomutase family. It depends on Mn(2+) as a cofactor.

It localises to the cytoplasm. The enzyme catalyses 2-deoxy-alpha-D-ribose 1-phosphate = 2-deoxy-D-ribose 5-phosphate. The catalysed reaction is alpha-D-ribose 1-phosphate = D-ribose 5-phosphate. It participates in carbohydrate degradation; 2-deoxy-D-ribose 1-phosphate degradation; D-glyceraldehyde 3-phosphate and acetaldehyde from 2-deoxy-alpha-D-ribose 1-phosphate: step 1/2. Functionally, isomerase that catalyzes the conversion of deoxy-ribose 1-phosphate (dRib-1-P) and ribose 1-phosphate (Rib-1-P) to deoxy-ribose 5-phosphate (dRib-5-P) and ribose 5-phosphate (Rib-5-P), respectively. The chain is Phosphopentomutase from Streptococcus pyogenes serotype M28 (strain MGAS6180).